Consider the following 526-residue polypeptide: Cytochrome P450 52A5 (526 aa).

Residues 18 to 38 form a helical membrane-spanning segment; that stretch reads WYVIVPLAIIIYKVFDYFYVL. A heme-binding site is contributed by cysteine 473.

This sequence belongs to the cytochrome P450 family. It depends on heme as a cofactor.

The protein resides in the membrane. Together with an NADPH cytochrome P450 the enzyme system catalyzes the terminal hydroxylation as the first step in the assimilation of alkanes and fatty acids. This Candida maltosa (Yeast) protein is Cytochrome P450 52A5 (CYP52A5).